We begin with the raw amino-acid sequence, 434 residues long: Trigger factor (434 aa).

The region spanning 161–246 is the PPIase FKBP-type domain; the sequence is EDRATIDFTG…LKKVEERELP (86 aa).

The protein belongs to the FKBP-type PPIase family. Tig subfamily.

The protein resides in the cytoplasm. It catalyses the reaction [protein]-peptidylproline (omega=180) = [protein]-peptidylproline (omega=0). Involved in protein export. Acts as a chaperone by maintaining the newly synthesized protein in an open conformation. Functions as a peptidyl-prolyl cis-trans isomerase. The polypeptide is Trigger factor (Pectobacterium atrosepticum (strain SCRI 1043 / ATCC BAA-672) (Erwinia carotovora subsp. atroseptica)).